The chain runs to 362 residues: G-protein coupled receptor homolog US27 (362 aa).

Residues 1 to 34 lie on the Virion surface side of the membrane; that stretch reads MTTSTNNQTLTQVSNMTNHTLNSTEIYQLFEYTR. Residues Asn-7, Asn-15, Asn-18, and Asn-22 are each glycosylated (N-linked (GlcNAc...) asparagine; by host). The chain crosses the membrane as a helical span at residues 35 to 58; sequence LGVWLMCIVGTFLNVLVITTILYY. At 59 to 67 the chain is on the intravirion side; sequence RRKKKSPSD. A helical transmembrane segment spans residues 68–90; the sequence is TYICNLAVADLLIVVGLPFFLEY. Topologically, residues 91 to 104 are virion surface; it reads AKHHPKLSREVVCS. The helical transmembrane segment at 105-126 threads the bilayer; sequence GLNACFYICLFAGVCFLINLSM. Over 127–148 the chain is Intravirion; it reads DRYCVIVWGVELNRVRNNKRAT. Residues 149-167 form a helical membrane-spanning segment; the sequence is CWVVIFWILAVLMGMPHYL. The Virion surface segment spans residues 168–193; that stretch reads MYSHTNNECVGEFANETSGWFPVFLN. Residues 194 to 213 form a helical membrane-spanning segment; the sequence is TKVNICGYLAPIALMAYTYN. The Intravirion portion of the chain corresponds to 214-233; that stretch reads RMVRFIINYVGKWHMQTLHV. The chain crosses the membrane as a helical span at residues 234-257; that stretch reads LLVVVVSFASFWFPFNLALFLESI. Residues 258–274 are Virion surface-facing; sequence RLLAGVYNDTLQNVIIF. Residues 275 to 298 form a helical membrane-spanning segment; sequence CLYVGQFLAYVRACLNPGIYILVG. At 299-362 the chain is on the intravirion side; that stretch reads TQMRKDMWTT…MESGEEEFLL (64 aa). Residues 341 to 362 form a disordered region; it reads TKRTHYDRKNAPMESGEEEFLL.

Belongs to the G-protein coupled receptor 1 family. Heterodimer with US28. Interacts with host Gi alpha-1 subunit GNAI1; this interaction does not lead to the catalytic activation of Gi complex.

The protein localises to the virion. The protein resides in the host cell membrane. Functionally, interacts with the host Gi complex without activating it, thereby probably interfering with the chemokine-Gi signaling. May also function as a G protein sink to sequester G protein from the cell surface via internalization. Plays an important role in spread of HCMV via the extracellular route. This chain is G-protein coupled receptor homolog US27 (US27), found in Homo sapiens (Human).